The sequence spans 142 residues: Holo-[acyl-carrier-protein] synthase (142 aa).

Aspartate 8 and glutamate 57 together coordinate Mg(2+).

The protein belongs to the P-Pant transferase superfamily. AcpS family. Mg(2+) is required as a cofactor.

Its subcellular location is the cytoplasm. It carries out the reaction apo-[ACP] + CoA = holo-[ACP] + adenosine 3',5'-bisphosphate + H(+). In terms of biological role, transfers the 4'-phosphopantetheine moiety from coenzyme A to a Ser of acyl-carrier-protein. The polypeptide is Holo-[acyl-carrier-protein] synthase (Maricaulis maris (strain MCS10) (Caulobacter maris)).